Consider the following 1035-residue polypeptide: Condensin complex subunit 3 (1035 aa).

HEAT repeat units follow at residues 113–150 (RFVD…NIGE) and 153–191 (ESLF…EEQT). A Phosphoserine modification is found at Ser-198. Residues 201–239 (EENFEATRTLVASIQNDPSAEVRRAAMLNLINDNNTRPY) form an HEAT 3 repeat. Positions 500 to 536 (EEKIKSKKINRRNETSVDEEDENGTHNDEVNEDEEDD) are disordered. HEAT repeat units lie at residues 597–635 (ILIA…LDVK) and 827–864 (VQLT…SSEQ). Over residues 909-919 (ERSETQTKDEN) the composition is skewed to basic and acidic residues. Disordered stretches follow at residues 909–934 (ERSE…GNSF) and 959–995 (TTVN…LENM). Composition is skewed to polar residues over residues 920–934 (NTAN…GNSF) and 959–973 (TTVN…TEQS). The residue at position 933 (Ser-933) is a Phosphoserine. The residue at position 981 (Ser-981) is a Phosphoserine. Residues 986–995 (IDTSKNLENM) show a composition bias toward polar residues. Phosphoserine is present on Ser-1008. Residues 1012 to 1035 (PDEKSDAMSIDEEDKDSESFSEVC) are disordered.

The protein belongs to the CND3 (condensin subunit 3) family. In terms of assembly, component of the condensin complex, which contains the SMC2 and SMC4 heterodimer, and three non SMC subunits that probably regulate the complex: BRN1, YCS4 and YCG1/YCS5.

Its subcellular location is the nucleus. It is found in the cytoplasm. It localises to the chromosome. Functionally, regulatory subunit of the condensin complex, a complex required for conversion of interphase chromatin into mitotic-like condense chromosomes. The condensin complex probably introduces positive supercoils into relaxed DNA in the presence of type I topoisomerases and converts nicked DNA into positive knotted forms in the presence of type II topoisomerases. The condensin complex probably also plays a role during interphase. The protein is Condensin complex subunit 3 (YCG1) of Saccharomyces cerevisiae (strain ATCC 204508 / S288c) (Baker's yeast).